The chain runs to 266 residues: Small ribosomal subunit protein mS42 (266 aa).

This sequence belongs to the mitochondrion-specific ribosomal protein mS42 family. In terms of assembly, component of the mitochondrial small ribosomal subunit (mt-SSU). Mature yeast 74S mitochondrial ribosomes consist of a small (37S) and a large (54S) subunit. The 37S small subunit contains a 15S ribosomal RNA (15S mt-rRNA) and 34 different proteins. The 54S large subunit contains a 21S rRNA (21S mt-rRNA) and 46 different proteins. mS42 forms a heterodimer with mS43, building a large protuberance adjacent to the mRNA channel exit in the mt-SSU body.

The protein resides in the mitochondrion. Component of the mitochondrial ribosome (mitoribosome), a dedicated translation machinery responsible for the synthesis of mitochondrial genome-encoded proteins, including at least some of the essential transmembrane subunits of the mitochondrial respiratory chain. The mitoribosomes are attached to the mitochondrial inner membrane and translation products are cotranslationally integrated into the membrane. The polypeptide is Small ribosomal subunit protein mS42 (RSM26) (Saccharomyces cerevisiae (strain ATCC 204508 / S288c) (Baker's yeast)).